We begin with the raw amino-acid sequence, 131 residues long: D-ribose pyranase (131 aa).

Histidine 20 functions as the Proton donor in the catalytic mechanism. Residues aspartate 28, histidine 98, and 120–122 contribute to the substrate site; that span reads YAN.

Belongs to the RbsD / FucU family. RbsD subfamily. As to quaternary structure, homodecamer.

The protein resides in the cytoplasm. The enzyme catalyses beta-D-ribopyranose = beta-D-ribofuranose. It functions in the pathway carbohydrate metabolism; D-ribose degradation; D-ribose 5-phosphate from beta-D-ribopyranose: step 1/2. Catalyzes the interconversion of beta-pyran and beta-furan forms of D-ribose. The polypeptide is D-ribose pyranase (Bacillus cereus (strain ZK / E33L)).